A 388-amino-acid polypeptide reads, in one-letter code: Succinate--CoA ligase [ADP-forming] subunit beta (388 aa).

In terms of domain architecture, ATP-grasp spans 9–244 (KGILSGFDVR…PHEYSEEELE (236 aa)). Residues Lys-46, 53–55 (GRG), Glu-99, Val-102, and Glu-107 contribute to the ATP site. 2 residues coordinate Mg(2+): Asn-199 and Asp-213. Residues Asn-264 and 320–322 (GIM) each bind substrate.

Belongs to the succinate/malate CoA ligase beta subunit family. As to quaternary structure, heterotetramer of two alpha and two beta subunits. Mg(2+) is required as a cofactor.

It carries out the reaction succinate + ATP + CoA = succinyl-CoA + ADP + phosphate. The catalysed reaction is GTP + succinate + CoA = succinyl-CoA + GDP + phosphate. Its pathway is carbohydrate metabolism; tricarboxylic acid cycle; succinate from succinyl-CoA (ligase route): step 1/1. Functionally, succinyl-CoA synthetase functions in the citric acid cycle (TCA), coupling the hydrolysis of succinyl-CoA to the synthesis of either ATP or GTP and thus represents the only step of substrate-level phosphorylation in the TCA. The beta subunit provides nucleotide specificity of the enzyme and binds the substrate succinate, while the binding sites for coenzyme A and phosphate are found in the alpha subunit. The polypeptide is Succinate--CoA ligase [ADP-forming] subunit beta (Anaplasma phagocytophilum (strain HZ)).